The following is a 1099-amino-acid chain: Probable inorganic carbon transporter subunit DabA (1099 aa).

The disordered stretch occupies residues 175 to 194 (RQGRRRFATTERRTRRTRRS). Over residues 176 to 194 (QGRRRFATTERRTRRTRRS) the composition is skewed to basic residues. Zn(2+) is bound by residues Cys-514, Asp-516, His-722, and Cys-737. The tract at residues 1071–1099 (AGAGAAQPTRDAIELPEQASGPLPARDGQ) is disordered.

This sequence belongs to the inorganic carbon transporter (TC 9.A.2) DabA family. As to quaternary structure, forms a complex with DabB. The cofactor is Zn(2+).

The protein resides in the cell membrane. In terms of biological role, part of an energy-coupled inorganic carbon pump. This is Probable inorganic carbon transporter subunit DabA from Parafrankia sp. (strain EAN1pec).